The sequence spans 379 residues: Chaperone protein DnaJ (379 aa).

The 66-residue stretch at 5–70 folds into the J domain; that stretch reads DYYEILEVSR…EKRAAYDRYG (66 aa). The segment at 135-213 adopts a CR-type zinc-finger fold; the sequence is GIKVPISYVT…CGGSGRVRNE (79 aa). Zn(2+) is bound by residues cysteine 148, cysteine 151, cysteine 165, cysteine 168, cysteine 187, cysteine 190, cysteine 201, and cysteine 204. CXXCXGXG motif repeat units lie at residues 148–155, 165–172, 187–194, and 201–208; these read CSSCSGIG, CGNCNGAG, CNVCNGEG, and CRRCGGSG.

Belongs to the DnaJ family. Homodimer. Zn(2+) is required as a cofactor.

The protein resides in the cytoplasm. Participates actively in the response to hyperosmotic and heat shock by preventing the aggregation of stress-denatured proteins and by disaggregating proteins, also in an autonomous, DnaK-independent fashion. Unfolded proteins bind initially to DnaJ; upon interaction with the DnaJ-bound protein, DnaK hydrolyzes its bound ATP, resulting in the formation of a stable complex. GrpE releases ADP from DnaK; ATP binding to DnaK triggers the release of the substrate protein, thus completing the reaction cycle. Several rounds of ATP-dependent interactions between DnaJ, DnaK and GrpE are required for fully efficient folding. Also involved, together with DnaK and GrpE, in the DNA replication of plasmids through activation of initiation proteins. The chain is Chaperone protein DnaJ from Anaplasma marginale (strain Florida).